Here is a 398-residue protein sequence, read N- to C-terminus: ATP-dependent RNA helicase eIF4A (398 aa).

The short motif at 25–53 (DSFDSMELKPELLRGVYAYGFERPSAIQQ) is the Q motif element. The Helicase ATP-binding domain occupies 56–226 (ILPIVKGNDV…TKFMRDPVRI (171 aa)). 69–76 (AQSGTGKT) provides a ligand contact to ATP. Residues 174–177 (DEAD) carry the DEAD box motif. Residues 237–398 (GIKQFYIAVE…EMPMNVADLI (162 aa)) form the Helicase C-terminal domain.

This sequence belongs to the DEAD box helicase family. eIF4A subfamily. In terms of assembly, component of the eIF4F complex, which composition varies with external and internal environmental conditions. It is composed of at least eIF4A, eIF4E and eIF4G.

The protein localises to the cytoplasm. The enzyme catalyses ATP + H2O = ADP + phosphate + H(+). In terms of biological role, ATP-dependent RNA helicase which is a subunit of the eIF4F complex involved in cap recognition and is required for mRNA binding to ribosome. In the current model of translation initiation, eIF4A unwinds RNA secondary structures in the 5'-UTR of mRNAs which is necessary to allow efficient binding of the small ribosomal subunit, and subsequent scanning for the initiator codon. The sequence is that of ATP-dependent RNA helicase eIF4A (tif1) from Emericella nidulans (strain FGSC A4 / ATCC 38163 / CBS 112.46 / NRRL 194 / M139) (Aspergillus nidulans).